Consider the following 388-residue polypeptide: Formate-dependent phosphoribosylglycinamide formyltransferase (388 aa).

N(1)-(5-phospho-beta-D-ribosyl)glycinamide contacts are provided by residues glutamate 15–leucine 16 and glutamate 75. ATP contacts are provided by residues arginine 107, lysine 148, serine 153–glutamine 158, glutamate 188–leucine 191, and glutamate 196. The ATP-grasp domain occupies aspartate 112–leucine 302. Glutamate 261 and glutamate 273 together coordinate Mg(2+). Residues aspartate 280, lysine 350, and arginine 357–arginine 358 contribute to the N(1)-(5-phospho-beta-D-ribosyl)glycinamide site.

This sequence belongs to the PurK/PurT family. As to quaternary structure, homodimer.

The catalysed reaction is N(1)-(5-phospho-beta-D-ribosyl)glycinamide + formate + ATP = N(2)-formyl-N(1)-(5-phospho-beta-D-ribosyl)glycinamide + ADP + phosphate + H(+). Its pathway is purine metabolism; IMP biosynthesis via de novo pathway; N(2)-formyl-N(1)-(5-phospho-D-ribosyl)glycinamide from N(1)-(5-phospho-D-ribosyl)glycinamide (formate route): step 1/1. Functionally, involved in the de novo purine biosynthesis. Catalyzes the transfer of formate to 5-phospho-ribosyl-glycinamide (GAR), producing 5-phospho-ribosyl-N-formylglycinamide (FGAR). Formate is provided by PurU via hydrolysis of 10-formyl-tetrahydrofolate. The sequence is that of Formate-dependent phosphoribosylglycinamide formyltransferase from Parasynechococcus marenigrum (strain WH8102).